Here is a 3036-residue protein sequence, read N- to C-terminus: DmX-like protein 2 (3036 aa).

WD repeat units follow at residues 108–145 (FLSS…ILEE), 167–207 (KTSV…KSSI), and 230–278 (AHPR…EDCL). Position 326 is a phosphoserine (Ser326). The interval 417-480 (KQVDHENDDA…EGSPRTYSRL (64 aa)) is disordered. Residues 422–434 (ENDDADREDEEHS) show a composition bias toward acidic residues. Residues 435–473 (QEDRERGLHMKLDHDLSLDRESEAGTGSSEHEDGEREGS) are compositionally biased toward basic and acidic residues. Phosphoserine is present on Ser473. Residues 492-532 (DRKIETLLTEWNKNPDMLFTIHPVDGTFLVWHVKYLDEYNP) form a WD 4 repeat. Residue Ser588 is modified to Phosphoserine. WD repeat units lie at residues 595 to 634 (HSRS…KSAF), 751 to 803 (LHTS…RKLL), and 878 to 920 (QPSQ…VQAC). The segment at 932 to 959 (SLLSVPGQKNVDSSPETSPSVSPMPHSS) is disordered. Phosphoserine occurs at positions 944 and 945. Residues 949 to 959 (SPSVSPMPHSS) show a composition bias toward low complexity. One copy of the WD 8 repeat lies at 1000–1037 (LSSSSIYPVCLAPYLVVTTCSDNKVRFWKCCMEANPEC). Phosphoserine is present on residues Ser1140, Ser1143, and Ser1151. 2 WD repeats span residues 1163 to 1204 (PNIK…VTEQ) and 1244 to 1281 (GTPS…VKFG). 2 positions are modified to phosphoserine: Ser1287 and Ser1400. Thr1417 is subject to Phosphothreonine. At Ser1857 the chain carries Phosphoserine. Residues 1927-1936 (ISHRMDDVPS) show a composition bias toward basic and acidic residues. Residues 1927 to 1952 (ISHRMDDVPSHSKALSDGNGSSGIEW) are disordered. Ser1984 carries the post-translational modification Phosphoserine. The tract at residues 1999 to 2033 (KSTDAREKDKQSDQKASDPNMLLTPQEEDDPEGDT) is disordered. Positions 2001–2014 (TDAREKDKQSDQKA) are enriched in basic and acidic residues. Thr2022 carries the post-translational modification Phosphothreonine. The segment covering 2024–2033 (QEEDDPEGDT) has biased composition (acidic residues). Residues 2122 to 2153 (GSYERHQIERRRLQAKREHAERRKSWLQKNQD) are a coiled coil. Phosphoserine occurs at positions 2399 and 2640. WD repeat units follow at residues 2761-2800 (RNLH…QLVC), 2804-2843 (AGNA…SNPK), 2850-2892 (CHSK…GNSL), 2898-2937 (CHDH…LIHT), 2940-2979 (AHDS…LIHS), and 2992-3030 (NIGA…NIPN).

In terms of assembly, interacts with MADD and RAB3GAP.

It is found in the cytoplasmic vesicle. The protein resides in the secretory vesicle. The protein localises to the synaptic vesicle membrane. Its subcellular location is the neuronal dense core vesicle. In terms of biological role, may serve as a scaffold protein for MADD and RAB3GA on synaptic vesicles. Plays a role in the brain as a key controller of neuronal and endocrine homeostatic processes. This is DmX-like protein 2 (DMXL2) from Homo sapiens (Human).